The following is a 187-amino-acid chain: Peptidyl-tRNA hydrolase (187 aa).

Tyr-16 lines the tRNA pocket. His-21 acts as the Proton acceptor in catalysis. TRNA contacts are provided by Tyr-66, Asn-68, and Asn-114.

It belongs to the PTH family. Monomer.

It is found in the cytoplasm. It carries out the reaction an N-acyl-L-alpha-aminoacyl-tRNA + H2O = an N-acyl-L-amino acid + a tRNA + H(+). In terms of biological role, hydrolyzes ribosome-free peptidyl-tRNAs (with 1 or more amino acids incorporated), which drop off the ribosome during protein synthesis, or as a result of ribosome stalling. Catalyzes the release of premature peptidyl moieties from peptidyl-tRNA molecules trapped in stalled 50S ribosomal subunits, and thus maintains levels of free tRNAs and 50S ribosomes. The polypeptide is Peptidyl-tRNA hydrolase (Malacoplasma penetrans (strain HF-2) (Mycoplasma penetrans)).